The following is a 231-amino-acid chain: NADH-ubiquinone oxidoreductase chain 4 (231 aa).

Transmembrane regions (helical) follow at residues 1–21 (PIAG…YGII), 34–54 (MFLP…LTCL), 63–85 (IAYS…TPWG), 89–111 (AMAL…NTTY), 128–148 (ILPM…ATPP), 169–189 (TIIL…HMFL), and 211–231 (LLMA…ELII).

Belongs to the complex I subunit 4 family.

The protein localises to the mitochondrion membrane. The catalysed reaction is a ubiquinone + NADH + 5 H(+)(in) = a ubiquinol + NAD(+) + 4 H(+)(out). Core subunit of the mitochondrial membrane respiratory chain NADH dehydrogenase (Complex I) that is believed to belong to the minimal assembly required for catalysis. Complex I functions in the transfer of electrons from NADH to the respiratory chain. The immediate electron acceptor for the enzyme is believed to be ubiquinone. The chain is NADH-ubiquinone oxidoreductase chain 4 (MT-ND4) from Cerrophidion godmani (Porthidium godmani).